A 79-amino-acid polypeptide reads, in one-letter code: Acyl carrier protein (79 aa).

The 76-residue stretch at 3-78 (QEILEKVCSI…DAVKFIEEKK (76 aa)) folds into the Carrier domain. An O-(pantetheine 4'-phosphoryl)serine modification is found at Ser-38.

Belongs to the acyl carrier protein (ACP) family. In terms of processing, 4'-phosphopantetheine is transferred from CoA to a specific serine of apo-ACP by AcpS. This modification is essential for activity because fatty acids are bound in thioester linkage to the sulfhydryl of the prosthetic group.

The protein resides in the cytoplasm. It participates in lipid metabolism; fatty acid biosynthesis. Its function is as follows. Carrier of the growing fatty acid chain in fatty acid biosynthesis. The protein is Acyl carrier protein of Prochlorococcus marinus (strain MIT 9312).